Reading from the N-terminus, the 239-residue chain is DNA repair protein RecO (239 aa).

The protein belongs to the RecO family.

Its function is as follows. Involved in DNA repair and RecF pathway recombination. The sequence is that of DNA repair protein RecO from Cereibacter sphaeroides (strain ATCC 17029 / ATH 2.4.9) (Rhodobacter sphaeroides).